Reading from the N-terminus, the 127-residue chain is Holo-[acyl-carrier-protein] synthase (127 aa).

Positions 7 and 56 each coordinate Mg(2+).

The protein belongs to the P-Pant transferase superfamily. AcpS family. It depends on Mg(2+) as a cofactor.

It localises to the cytoplasm. It catalyses the reaction apo-[ACP] + CoA = holo-[ACP] + adenosine 3',5'-bisphosphate + H(+). Its function is as follows. Transfers the 4'-phosphopantetheine moiety from coenzyme A to a Ser of acyl-carrier-protein. The protein is Holo-[acyl-carrier-protein] synthase of Leptospira biflexa serovar Patoc (strain Patoc 1 / Ames).